The sequence spans 534 residues: Calmodulin calcium-dependent NAD kinase (534 aa).

The calmodulin-binding stretch occupies residues 167–196 (QKVPKLKDFVMAATRKQRFERVTKDLKVKR). Residue 238 to 245 (GGMGAGKS) participates in ATP binding.

As to quaternary structure, interacts with calmodulin (CaM) in a calcium Ca(2+)-dependent manner in vitro. The cofactor is Ca(2+).

Its subcellular location is the mitochondrion outer membrane. It catalyses the reaction NAD(+) + ATP = ADP + NADP(+) + H(+). Phosphorylates NAD(+) to produce NADP(+) in a calmodulin calcium-dependent manner. Does not possess activity toward NADH. Has broad specificity for the phosphoryl donor, as ATP, CTP, GTP and UTP can be used interchangeably and produce similar efficiencies. May play a role in producing NADP(H) needed to regulate the elicitor-induced reactive oxygen species (ROS) burst by sustaining the activity of NADPH oxidases. Does not seem to play a role in photosynthesis-driven growth. In Arabidopsis thaliana (Mouse-ear cress), this protein is Calmodulin calcium-dependent NAD kinase.